The primary structure comprises 447 residues: MTTFFSLTTAAAVLTLARGSNALVRPGNVGKLPALGWNTWNAFGCDIDATKIMTAANEVVNLGLKDLGYEYINIDDCWSVKSGRDASTQRIIPDPDKFPDGISGVADQIHDLGLKIGIYSSAGLTTCAGYPASLGYEDIDAQTFAEWGIDYLKYDNCGVPSNWTDTYTYCVPDPGSKATNGTCPDNKNPAPAGYDWRTSLTAERYRRMRDALVSVDRTILYSLCEWGQANVNDWGNETGNSWRTTGDITPSWPRIAAIANENSFLMNHVDFWGYPDPDMLEVGNGNLTLAENRAHFALWAAMKSPLIIGTALDSISQDHLAILSNKILLKFHQDPVIGRPAQPYKWGYNPDWTFDPAHPAEYWSGASSVLGGTLVLMLNSEDTTQRRTAVWKEVPELKDVLGRQGKRRIGFRVTDVWTGKDLGCVRDHYSVELESHDVAALVVGRAC.

Positions 1–25 (MTTFFSLTTAAAVLTLARGSNALVR) are cleaved as a signal peptide. 2 disulfide bridges follow: Cys-45–Cys-77 and Cys-127–Cys-157. The active-site Nucleophile is the Asp-155. Residues Asn-162 and Asn-180 are each glycosylated (N-linked (GlcNAc...) asparagine). 225-229 (EWGQA) contacts substrate. A glycan (N-linked (GlcNAc...) asparagine) is linked at Asn-236. Asp-247 acts as the Proton donor in catalysis. The N-linked (GlcNAc...) asparagine glycan is linked to Asn-286.

This sequence belongs to the glycosyl hydrolase 27 family.

It localises to the secreted. The catalysed reaction is Hydrolysis of terminal, non-reducing alpha-D-galactose residues in alpha-D-galactosides, including galactose oligosaccharides, galactomannans and galactolipids.. Functionally, hydrolyzes a variety of simple alpha-D-galactoside as well as more complex molecules such as oligosaccharides and polysaccharides. This Aspergillus fumigatus (strain ATCC MYA-4609 / CBS 101355 / FGSC A1100 / Af293) (Neosartorya fumigata) protein is Probable alpha-galactosidase B (aglB).